We begin with the raw amino-acid sequence, 294 residues long: Large ribosomal subunit protein uL18B (294 aa).

This sequence belongs to the universal ribosomal protein uL18 family. In terms of assembly, component of the large ribosomal subunit (LSU). Mature yeast ribosomes consist of a small (40S) and a large (60S) subunit. The 40S small subunit contains 1 molecule of ribosomal RNA (18S rRNA) and 33 different proteins (encoded by 57 genes). The large 60S subunit contains 3 rRNA molecules (25S, 5.8S and 5S rRNA) and 46 different proteins (encoded by 81 genes). Component of a hexameric 5S RNP precursor complex, composed of 5S RNA, rrs1, rpf2, rpl5a/rpl5b, rpl11a/rpl11b and syo1; this complex acts as a precursor for ribosome assembly. rpl5a/rpl5b/uL18 forms a heterotrimeric complex with syo1 and rpl11a/rpl11b/uL5. Interaction of this complex with KAP104 allows the nuclear import of the heterotrimer.

Its subcellular location is the cytoplasm. It is found in the nucleus. Functionally, component of the ribosome, a large ribonucleoprotein complex responsible for the synthesis of proteins in the cell. The small ribosomal subunit (SSU) binds messenger RNAs (mRNAs) and translates the encoded message by selecting cognate aminoacyl-transfer RNA (tRNA) molecules. The large subunit (LSU) contains the ribosomal catalytic site termed the peptidyl transferase center (PTC), which catalyzes the formation of peptide bonds, thereby polymerizing the amino acids delivered by tRNAs into a polypeptide chain. The nascent polypeptides leave the ribosome through a tunnel in the LSU and interact with protein factors that function in enzymatic processing, targeting, and the membrane insertion of nascent chains at the exit of the ribosomal tunnel. The chain is Large ribosomal subunit protein uL18B (rpl502) from Schizosaccharomyces pombe (strain 972 / ATCC 24843) (Fission yeast).